Consider the following 198-residue polypeptide: MHYPAPISKLIDSFMKLPGIGPKTASRLAFHVLDMKEDDVVGFAKALVDVKRELTYCSVCGHITDTDPCYICEDKTRDQSMICVVEETKDVIAMEKMREYKGLYHVLHGAISPMEGVGPEDINVPSLLTRLRDEHIQELILATNPNIEGESTAMYIARLVKPIGIKVTRLAHGLPVGGDLEYADEVTLSKAITGRTEI.

The C4-type zinc-finger motif lies at 57 to 72; that stretch reads CSVCGHITDTDPCYIC. The 96-residue stretch at 80–175 folds into the Toprim domain; sequence SMICVVEETK…KVTRLAHGLP (96 aa).

It belongs to the RecR family.

In terms of biological role, may play a role in DNA repair. It seems to be involved in an RecBC-independent recombinational process of DNA repair. It may act with RecF and RecO. This is Recombination protein RecR from Macrococcus caseolyticus (strain JCSC5402) (Macrococcoides caseolyticum).